The following is a 32-amino-acid chain: Kappa-theraphotoxin-Gr2b (32 aa).

Disulfide bonds link cysteine 2-cysteine 16, cysteine 9-cysteine 21, and cysteine 15-cysteine 25.

It belongs to the neurotoxin 30 (phrixotoxin) family. Expressed by the venom gland.

It localises to the secreted. Its function is as follows. Binds the voltage-sensor domain of the potassium channel KvAP (from the archaeon Aeropyrum pernix) and affects channel gating. This is Kappa-theraphotoxin-Gr2b from Grammostola rosea (Chilean rose tarantula).